Consider the following 147-residue polypeptide: Receptor activity-modifying protein 3 (147 aa).

The signal sequence occupies residues 1–22 (MKTPAQRLHLLPLLLLLCGECA). Residues 23–112 (QVCGCNETGM…CTVDRTHWED (90 aa)) are Extracellular-facing. Residues N28, N57, N70, and N102 are each glycosylated (N-linked (GlcNAc...) asparagine). 2 cysteine pairs are disulfide-bonded: C39–C71 and C56–C103. The helical transmembrane segment at 113 to 137 (PPDEVLIPLIAVPVVLTVAMAGLVV) threads the bilayer. At 138–147 (WRSKHTDRLL) the chain is on the cytoplasmic side.

This sequence belongs to the RAMP family. As to quaternary structure, heterodimer of CALCRL and RAMP3; interaction induces allosteric modulation of CALCRL function and ligand specificity for adrenomedullin/ADM and intermedin/ADM2. Heterodimer of CALCR and RAMP3; interaction form the receptor complex AMYR3 for amylin/IAPP. Interacts with GPER1. Expressed predominantly in the testis, embryonic and adult brain and in kidney.

The protein resides in the cell membrane. The protein localises to the membrane. Functionally, accessory protein that interacts with and modulates the function of G-protein coupled receptors including calcitonin gene-related peptide type 1 receptor (CALCRL), calcitonin receptor (CALCR) and G-protein coupled estrogen receptor 1 (GPER1). Required for the transport of CALCRL and GPER1 receptors to the plasma membrane. Plays a role in cardioprotection by reducing cardiac hypertrophy and perivascular fibrosis in a GPER1-dependent manner. Together with CALCRL, form a receptor complex for adrenomedullin/ADM and intermedin/ADM2. Together with CALCR, act as a receptor complex for amylin/IAPP. This Mus musculus (Mouse) protein is Receptor activity-modifying protein 3.